Reading from the N-terminus, the 209-residue chain is Probable L-serine dehydratase, alpha chain (209 aa).

This sequence belongs to the iron-sulfur dependent L-serine dehydratase family. In terms of assembly, heterodimer of an alpha chain and a beta chain. It depends on [4Fe-4S] cluster as a cofactor.

The catalysed reaction is L-serine = pyruvate + NH4(+). It participates in carbohydrate biosynthesis; gluconeogenesis. The protein is Probable L-serine dehydratase, alpha chain (sdhA) of Latilactobacillus sakei (Lactobacillus sakei).